The primary structure comprises 397 residues: Enoyl-[acyl-carrier-protein] reductase [NADH] (397 aa).

Residues 48 to 53 (GASTGY), 74 to 75 (FE), 111 to 112 (DA), and 139 to 140 (LA) contribute to the NAD(+) site. Residue Y225 participates in substrate binding. The active-site Proton donor is Y235. NAD(+)-binding positions include K244 and 273–275 (VVT).

Belongs to the TER reductase family. Monomer.

It catalyses the reaction a 2,3-saturated acyl-[ACP] + NAD(+) = a (2E)-enoyl-[ACP] + NADH + H(+). It functions in the pathway lipid metabolism; fatty acid biosynthesis. Involved in the final reduction of the elongation cycle of fatty acid synthesis (FAS II). Catalyzes the reduction of a carbon-carbon double bond in an enoyl moiety that is covalently linked to an acyl carrier protein (ACP). This Edwardsiella ictaluri (strain 93-146) protein is Enoyl-[acyl-carrier-protein] reductase [NADH].